Consider the following 127-residue polypeptide: Holotricin-2 (127 aa).

Residues 1–15 (MMKLVIALCLIGISA) form the signal peptide. Positions 16-55 (AYVVPVYYEIYPEDATFDEADIEPQLSPAELHHGSIRERR) are excised as a propeptide. The tract at residues 43–84 (PAELHHGSIRERRSLQPGAPSFPMPGSQLPTSVSGNVEKQGR) is disordered. Positions 45–56 (ELHHGSIRERRS) are enriched in basic and acidic residues. Positions 70–84 (QLPTSVSGNVEKQGR) are enriched in polar residues.

This sequence belongs to the coleoptericin family. In terms of tissue distribution, hemolymph.

It is found in the secreted. Antibacterial activity against Gram-negative bacteria but not against Gram-positive bacteria. The polypeptide is Holotricin-2 (Holotrichia diomphalia (Korean black chafer)).